We begin with the raw amino-acid sequence, 218 residues long: Thiamine-phosphate synthase (218 aa).

4-amino-2-methyl-5-(diphosphooxymethyl)pyrimidine is bound by residues 36–40 (QVRSK) and D70. D71 and D94 together coordinate Mg(2+). A 4-amino-2-methyl-5-(diphosphooxymethyl)pyrimidine-binding site is contributed by T113. Position 141-143 (141-143 (TPT)) interacts with 2-[(2R,5Z)-2-carboxy-4-methylthiazol-5(2H)-ylidene]ethyl phosphate. A 4-amino-2-methyl-5-(diphosphooxymethyl)pyrimidine-binding site is contributed by K144.

Belongs to the thiamine-phosphate synthase family. Mg(2+) is required as a cofactor.

The catalysed reaction is 2-[(2R,5Z)-2-carboxy-4-methylthiazol-5(2H)-ylidene]ethyl phosphate + 4-amino-2-methyl-5-(diphosphooxymethyl)pyrimidine + 2 H(+) = thiamine phosphate + CO2 + diphosphate. It catalyses the reaction 2-(2-carboxy-4-methylthiazol-5-yl)ethyl phosphate + 4-amino-2-methyl-5-(diphosphooxymethyl)pyrimidine + 2 H(+) = thiamine phosphate + CO2 + diphosphate. It carries out the reaction 4-methyl-5-(2-phosphooxyethyl)-thiazole + 4-amino-2-methyl-5-(diphosphooxymethyl)pyrimidine + H(+) = thiamine phosphate + diphosphate. Its pathway is cofactor biosynthesis; thiamine diphosphate biosynthesis; thiamine phosphate from 4-amino-2-methyl-5-diphosphomethylpyrimidine and 4-methyl-5-(2-phosphoethyl)-thiazole: step 1/1. Functionally, condenses 4-methyl-5-(beta-hydroxyethyl)thiazole monophosphate (THZ-P) and 2-methyl-4-amino-5-hydroxymethyl pyrimidine pyrophosphate (HMP-PP) to form thiamine monophosphate (TMP). The protein is Thiamine-phosphate synthase of Corynebacterium jeikeium (strain K411).